The following is a 59-amino-acid chain: U-myrmeciitoxin(01)-Mg5a (59 aa).

Residues 1–21 form the signal peptide; the sequence is MRLSYLSLALAIIFVLTIMHA. The propeptide occupies 22–38; it reads SNVEAKASADPEPDAVG.

In terms of tissue distribution, expressed by the venom gland.

It is found in the secreted. In terms of biological role, may have antimicrobial properties, like most ant linear peptides. This Myrmecia gulosa (Red bulldog ant) protein is U-myrmeciitoxin(01)-Mg5a.